The chain runs to 518 residues: Retinal dehydrogenase 2 (518 aa).

Phosphotyrosine is present on Tyr-168. Residues 184–186 (IPW), 210–213 (KPAE), and 264–266 (STE) contribute to the NAD(+) site. The active-site Proton acceptor is Glu-286. The active-site Nucleophile is Cys-320. Ser-351 bears the Phosphoserine mark. NAD(+)-binding positions include 366–370 (KQYNK) and Glu-417.

It belongs to the aldehyde dehydrogenase family. Homotetramer.

Its subcellular location is the cytoplasm. It catalyses the reaction retinal + NAD(+) + H2O = retinoate + NADH + 2 H(+). It carries out the reaction all-trans-retinal + NAD(+) + H2O = all-trans-retinoate + NADH + 2 H(+). The catalysed reaction is all-trans-13,14-dihydroretinal + NAD(+) + H2O = all-trans-13,14-dihydroretinoate + NADH + 2 H(+). Its pathway is cofactor metabolism; retinol metabolism. In terms of biological role, catalyzes the NAD-dependent oxidation of aldehyde substrates, such as all-trans-retinal and all-trans-13,14-dihydroretinal, to their corresponding carboxylic acids, all-trans-retinoate and all-trans-13,14-dihydroretinoate, respectively. Retinoate signaling is critical for the transcriptional control of many genes, for instance it is crucial for initiation of meiosis in both male and female. Recognizes retinal as substrate, both in its free form and when bound to cellular retinol-binding protein. Can metabolize octanal and decanal, but has only very low activity with benzaldehyde, acetaldehyde and propanal. Displays complete lack of activity with citral. The polypeptide is Retinal dehydrogenase 2 (ALDH1A2) (Homo sapiens (Human)).